We begin with the raw amino-acid sequence, 88 residues long: Small ribosomal subunit protein uS17 (88 aa).

Belongs to the universal ribosomal protein uS17 family. Part of the 30S ribosomal subunit.

One of the primary rRNA binding proteins, it binds specifically to the 5'-end of 16S ribosomal RNA. This is Small ribosomal subunit protein uS17 from Nitratidesulfovibrio vulgaris (strain DSM 19637 / Miyazaki F) (Desulfovibrio vulgaris).